Here is a 343-residue protein sequence, read N- to C-terminus: Thiamine-phosphate synthase (343 aa).

Residues 1–123 (MQQASPTAIA…GACCKQLRYR (123 aa)) are unknown. Positions 124–343 (VYALESGLLG…LLTQLSRINP (220 aa)) are thiamine-phosphate synthase. Residues 171–175 (QYRDK) and Asn-203 contribute to the 4-amino-2-methyl-5-(diphosphooxymethyl)pyrimidine site. Mg(2+)-binding residues include Asp-204 and Asp-223. 4-amino-2-methyl-5-(diphosphooxymethyl)pyrimidine is bound at residue Ser-242. 268 to 270 (TPT) lines the 2-[(2R,5Z)-2-carboxy-4-methylthiazol-5(2H)-ylidene]ethyl phosphate pocket. Residue Lys-271 coordinates 4-amino-2-methyl-5-(diphosphooxymethyl)pyrimidine. Gly-298 serves as a coordination point for 2-[(2R,5Z)-2-carboxy-4-methylthiazol-5(2H)-ylidene]ethyl phosphate.

Belongs to the thiamine-phosphate synthase family. Requires Mg(2+) as cofactor.

The enzyme catalyses 2-[(2R,5Z)-2-carboxy-4-methylthiazol-5(2H)-ylidene]ethyl phosphate + 4-amino-2-methyl-5-(diphosphooxymethyl)pyrimidine + 2 H(+) = thiamine phosphate + CO2 + diphosphate. It carries out the reaction 2-(2-carboxy-4-methylthiazol-5-yl)ethyl phosphate + 4-amino-2-methyl-5-(diphosphooxymethyl)pyrimidine + 2 H(+) = thiamine phosphate + CO2 + diphosphate. The catalysed reaction is 4-methyl-5-(2-phosphooxyethyl)-thiazole + 4-amino-2-methyl-5-(diphosphooxymethyl)pyrimidine + H(+) = thiamine phosphate + diphosphate. It functions in the pathway cofactor biosynthesis; thiamine diphosphate biosynthesis; thiamine phosphate from 4-amino-2-methyl-5-diphosphomethylpyrimidine and 4-methyl-5-(2-phosphoethyl)-thiazole: step 1/1. Condenses 4-methyl-5-(beta-hydroxyethyl)thiazole monophosphate (THZ-P) and 2-methyl-4-amino-5-hydroxymethyl pyrimidine pyrophosphate (HMP-PP) to form thiamine monophosphate (TMP). This chain is Thiamine-phosphate synthase, found in Synechocystis sp. (strain ATCC 27184 / PCC 6803 / Kazusa).